A 443-amino-acid polypeptide reads, in one-letter code: Glutamate-1-semialdehyde 2,1-aminomutase (443 aa).

Lysine 277 carries the post-translational modification N6-(pyridoxal phosphate)lysine.

Belongs to the class-III pyridoxal-phosphate-dependent aminotransferase family. HemL subfamily. As to quaternary structure, homodimer. Requires pyridoxal 5'-phosphate as cofactor.

It is found in the cytoplasm. The enzyme catalyses (S)-4-amino-5-oxopentanoate = 5-aminolevulinate. It functions in the pathway porphyrin-containing compound metabolism; protoporphyrin-IX biosynthesis; 5-aminolevulinate from L-glutamyl-tRNA(Glu): step 2/2. The chain is Glutamate-1-semialdehyde 2,1-aminomutase from Pseudarthrobacter chlorophenolicus (strain ATCC 700700 / DSM 12829 / CIP 107037 / JCM 12360 / KCTC 9906 / NCIMB 13794 / A6) (Arthrobacter chlorophenolicus).